The chain runs to 498 residues: MKYQRVKGTQDYGVEKAFLKDAVESLFLKEVRLHGFEYVELPTLEHAQLFRSTVAQSDIGNKEMYEFLDKSQRELCLRPEMTANFVRAFVQNKWHAASAENKYAYVGKVFRYERPQKGRYREFTQAGVEFVGKADFFKDLYVITLVLRLLAKLHIKYTLKLNYISNKETRKKYEETLHKYLLEYKDQLSESSQKRLETGNVFRVLDDKEDSQKDFVKNAPKLSDFYSEEDKEYVKNIKRGLDTYHGLEYQFDEQVVRGLDYYDDLVFEVSIKDSKAAQDVIIGGGRYSNLIKDLEGPETSSIGFAMGVDRVVDYLMDQEVYKEHLDKLETAHSENEYYFWAHPEASYKLNFFVWFFNLQLNEHISSSLLFDYDSPNRNKAFEKAKKLNSKAFVTLEEDNSLTVYDFKYGTKKDADLKEQYHHLDFTSLLDSRHFDNLFDSNLFKPSPKELMCMCSAFRNRFGDSKALLKFAKQFHYSEDDVYFSDQKIKKSKWKSAKS.

It belongs to the class-II aminoacyl-tRNA synthetase family. Homodimer.

It localises to the cytoplasm. The enzyme catalyses tRNA(His) + L-histidine + ATP = L-histidyl-tRNA(His) + AMP + diphosphate + H(+). The sequence is that of Histidine--tRNA ligase from Mycoplasmopsis synoviae (strain 53) (Mycoplasma synoviae).